The chain runs to 557 residues: Putative glutathione-regulated potassium-efflux system protein KefB (557 aa).

Transmembrane regions (helical) follow at residues 2 to 22, 24 to 44, 56 to 76, 84 to 104, 121 to 141, 146 to 166, 176 to 196, 199 to 219, 237 to 257, and 260 to 280; these read LGYL…ISDV, EILH…GLEL, IFGV…GLLM, AAVV…LQLM, VLLF…LLAG, HFDW…LIGG, FIAA…LVLG, LFMD…GVLL, GLLL…GVLY, and LLWV…VLYL. Positions 356-475 constitute an RCK N-terminal domain; sequence KPQVIVVGFG…AGVTQFSRET (120 aa).

Belongs to the monovalent cation:proton antiporter 2 (CPA2) transporter (TC 2.A.37) family. KefB subfamily. In terms of assembly, interacts with the regulatory subunit KefG.

The protein localises to the cell inner membrane. Its function is as follows. Pore-forming subunit of a potassium efflux system that confers protection against electrophiles. Catalyzes K(+)/H(+) antiport. The protein is Putative glutathione-regulated potassium-efflux system protein KefB of Shigella flexneri.